The following is a 112-amino-acid chain: UPF0060 membrane protein Mpe_A1656 (112 aa).

4 helical membrane passes run 9–29 (GLFF…WLVL), 34–54 (SAWL…LLTL), 65–85 (AYGG…DGVV), and 91–111 (LVGG…PRAA).

Belongs to the UPF0060 family.

It localises to the cell inner membrane. The chain is UPF0060 membrane protein Mpe_A1656 from Methylibium petroleiphilum (strain ATCC BAA-1232 / LMG 22953 / PM1).